A 910-amino-acid chain; its full sequence is Protein translocase subunit SecA 1 (910 aa).

ATP contacts are provided by residues glutamine 86, 104–108 (GEGKT), and aspartate 512. Cysteine 894, cysteine 896, cysteine 905, and histidine 906 together coordinate Zn(2+).

This sequence belongs to the SecA family. As to quaternary structure, monomer and homodimer. Part of the essential Sec protein translocation apparatus which comprises SecA, SecYEG and auxiliary proteins SecDF-YajC and YidC. Zn(2+) is required as a cofactor.

The protein resides in the cell inner membrane. Its subcellular location is the cytoplasm. The enzyme catalyses ATP + H2O + cellular proteinSide 1 = ADP + phosphate + cellular proteinSide 2.. Its function is as follows. Part of the Sec protein translocase complex. Interacts with the SecYEG preprotein conducting channel. Has a central role in coupling the hydrolysis of ATP to the transfer of proteins into and across the cell membrane, serving both as a receptor for the preprotein-SecB complex and as an ATP-driven molecular motor driving the stepwise translocation of polypeptide chains across the membrane. The protein is Protein translocase subunit SecA 1 of Bordetella avium (strain 197N).